The primary structure comprises 1142 residues: Ribonucleoside-diphosphate reductase large subunit (1142 aa).

Residues 1 to 33 (MANRPAASALAGARSPSERQEPREPEVAPPGGD) are disordered. Residues 16-26 (PSERQEPREPE) show a composition bias toward basic and acidic residues. Residues 55–75 (AYRISDSSFVQCGSNCSMIID) carry the RIP homotypic interaction motif (RHIM) motif. Residues 118-322 (SGPSATTSVG…TDPGYPVPLE (205 aa)) are disordered. A compositionally biased stretch (polar residues) spans 119 to 132 (GPSATTSVGTQTSG). Residues 141–159 (TPEPQGPQAVPPPPPPPFP) are compositionally biased toward pro residues. The segment covering 164–179 (CCARRDARGGAEKDVG) has biased composition (basic and acidic residues). The segment covering 192 to 205 (SETEDSDSSDEDTG) has biased composition (acidic residues). Positions 277–303 (GSATDPRASADSDSAAHAAAPQADVAP) are enriched in low complexity. Positions 294-400 (AAAPQADVAP…CLDLPPVPPN (107 aa)) are alpha-crystallin domain. Substrate-binding positions include Thr-571, 586–587 (SC), Gly-617, 796–800 (NLCTE), and 973–977 (PTAAS). A disulfide bridge links Cys-587 with Cys-813. The Proton acceptor role is filled by Asn-796. The active-site Cysteine radical intermediate is Cys-798. The Proton acceptor role is filled by Glu-800.

It belongs to the ribonucleoside diphosphate reductase large chain family. As to quaternary structure, heterotetramer composed of a homodimer of the large subunit (R1) and a homodimer of the small subunit (R2). Larger multisubunit protein complex are also active, composed of (R1)n(R2)n. May self-assemble (via RIP homotypic interaction motif/RHIM) into homomeric fibrillar amyloid structures. Interacts (via RHIM) with human RIPK1 (via RHIM). Interacts (via RHIM) with human RIPK3 (via RHIM). May interact (via RHIM) with human ZBP1 (via RHIM). Interacts (via C-terminus) with host CASP8.

It localises to the host cell membrane. The protein resides in the host endosome membrane. The catalysed reaction is a 2'-deoxyribonucleoside 5'-diphosphate + [thioredoxin]-disulfide + H2O = a ribonucleoside 5'-diphosphate + [thioredoxin]-dithiol. Ribonucleoside-diphosphate reductase holoenzyme that provides the precursors necessary for viral DNA synthesis. Allows virus growth in non-dividing cells, as well as reactivation from latency in infected hosts. Catalyzes the biosynthesis of deoxyribonucleotides from the corresponding ribonucleotides. The N-terminal region confers antiapoptotic activity in differentiated cells such as neurons and is important for viral reactivation to increase neural survivability. Prevents host necroptosis by targeting host RIPK1 and RIPK3, thereby hampering the formation of necroptotic RIPK1-RIPK3 complexes. May form hetero-amyloid structures with host proteins RIPK3 or ZBP1, thereby preventing RIPK3- and ZBP1-mediated necroptosis. In addition, inhibits extrinsic apoptosis by targeting host CASP8. The chain is Ribonucleoside-diphosphate reductase large subunit from Homo sapiens (Human).